Consider the following 165-residue polypeptide: Shikimate kinase (165 aa).

Position 11–16 (11–16 (GAGKTT)) interacts with ATP. Threonine 15 contacts Mg(2+). Substrate contacts are provided by aspartate 33, arginine 57, and glycine 78. An ATP-binding site is contributed by arginine 116. Arginine 134 contacts substrate.

This sequence belongs to the shikimate kinase family. Monomer. The cofactor is Mg(2+).

It is found in the cytoplasm. It carries out the reaction shikimate + ATP = 3-phosphoshikimate + ADP + H(+). The protein operates within metabolic intermediate biosynthesis; chorismate biosynthesis; chorismate from D-erythrose 4-phosphate and phosphoenolpyruvate: step 5/7. Its function is as follows. Catalyzes the specific phosphorylation of the 3-hydroxyl group of shikimic acid using ATP as a cosubstrate. This chain is Shikimate kinase, found in Bacillus mycoides (strain KBAB4) (Bacillus weihenstephanensis).